We begin with the raw amino-acid sequence, 804 residues long: Tubulin polyglutamylase TTLL13 (804 aa).

Positions Met1–Arg41 are disordered. Residues Asn4–Ser30 adopt a coiled-coil conformation. Acidic residues predominate over residues Ser11–Val26. Positions Arg85–Glu430 constitute a TTL domain. ATP-binding positions include Lys202, Gln208–Gly209, Gln230–Ile233, and Lys243–Asp245. Residue Gln208 participates in a protein binding. Position 269 (Arg269) interacts with L-glutamate. Position 291-292 (Thr291–Asn292) interacts with ATP. Residues Tyr293 and Lys311 each coordinate L-glutamate. Positions 376, 389, and 391 each coordinate Mg(2+). Residue His392 participates in a protein binding. Residues Arg401–Gly482 form a c-MTBD region region. Residue Lys407 participates in L-glutamate binding. Coiled-coil stretches lie at residues Ala504 to Asn541 and Gln585 to Leu609. The segment at Ile519–Thr556 is disordered. The segment covering Glu536–Arg551 has biased composition (basic and acidic residues).

Belongs to the tubulin--tyrosine ligase family. The cofactor is Mg(2+). As to expression, highly expressed in heart and testis. Expressed in brain, kidney, liver, lung, muscle and trachea. In the brain, expressed in ependymal cilia, cortex, corpus callosum and striatum.

The catalysed reaction is (L-glutamyl)(n)-gamma-L-glutamyl-L-glutamyl-[protein] + L-glutamate + ATP = (L-glutamyl)(n+1)-gamma-L-glutamyl-L-glutamyl-[protein] + ADP + phosphate + H(+). Functionally, polyglutamylase which modifies tubulin, generating polyglutamate side chains of variable lengths on the gamma-carboxyl group of specific glutamate residues within the C-terminal tail of tubulin. Mediates ATP-dependent polyglutamate side-chain elongation of the polyglutamylation reaction but not the initiation step. Preferentially modifies the alpha-tubulin tail over a beta-tail. The chain is Tubulin polyglutamylase TTLL13 from Mus musculus (Mouse).